The primary structure comprises 653 residues: DNA ligase (653 aa).

NAD(+) contacts are provided by residues 32-36 (NFEYD) and 80-81 (SL). Residue Lys-104 is the N6-AMP-lysine intermediate of the active site. Residues Arg-125, Glu-159, and Lys-297 each coordinate NAD(+). Zn(2+) contacts are provided by Cys-386, Cys-389, Cys-406, and Cys-411. Residues 571-653 (GGSEKLKGLT…EEFIQLLNEA (83 aa)) enclose the BRCT domain.

Belongs to the NAD-dependent DNA ligase family. LigA subfamily. Mg(2+) serves as cofactor. Mn(2+) is required as a cofactor.

The enzyme catalyses NAD(+) + (deoxyribonucleotide)n-3'-hydroxyl + 5'-phospho-(deoxyribonucleotide)m = (deoxyribonucleotide)n+m + AMP + beta-nicotinamide D-nucleotide.. Functionally, DNA ligase that catalyzes the formation of phosphodiester linkages between 5'-phosphoryl and 3'-hydroxyl groups in double-stranded DNA using NAD as a coenzyme and as the energy source for the reaction. It is essential for DNA replication and repair of damaged DNA. The polypeptide is DNA ligase (Lachnoclostridium phytofermentans (strain ATCC 700394 / DSM 18823 / ISDg) (Clostridium phytofermentans)).